A 503-amino-acid chain; its full sequence is Aromatase (503 aa).

3 helical membrane passes run 19 to 39 (EVVP…LLVW), 53 to 73 (FLGI…IGSA), and 303 to 323 (MLIA…FLIA). 2 residues coordinate substrate: Asp-309 and Met-374. Cys-437 is a heme binding site.

This sequence belongs to the cytochrome P450 family. The cofactor is heme.

It localises to the endoplasmic reticulum membrane. The protein resides in the microsome membrane. The enzyme catalyses testosterone + 3 reduced [NADPH--hemoprotein reductase] + 3 O2 = 17beta-estradiol + formate + 3 oxidized [NADPH--hemoprotein reductase] + 4 H2O + 4 H(+). It carries out the reaction androst-4-ene-3,17-dione + 3 reduced [NADPH--hemoprotein reductase] + 3 O2 = estrone + formate + 3 oxidized [NADPH--hemoprotein reductase] + 4 H2O + 4 H(+). The catalysed reaction is androst-4-ene-3,17-dione + reduced [NADPH--hemoprotein reductase] + O2 = 19-hydroxyandrost-4-ene-3,17-dione + oxidized [NADPH--hemoprotein reductase] + H2O + H(+). It catalyses the reaction 19-hydroxyandrost-4-ene-3,17-dione + reduced [NADPH--hemoprotein reductase] + O2 = 19-oxo-androst-4-ene-3,17-dione + oxidized [NADPH--hemoprotein reductase] + 2 H2O + H(+). The enzyme catalyses 19-oxo-androst-4-ene-3,17-dione + reduced [NADPH--hemoprotein reductase] + O2 = estrone + formate + oxidized [NADPH--hemoprotein reductase] + H2O + 2 H(+). It carries out the reaction estrone + reduced [NADPH--hemoprotein reductase] + O2 = 2-hydroxyestrone + oxidized [NADPH--hemoprotein reductase] + H2O + H(+). The catalysed reaction is 17beta-hydroxy-5alpha-androstan-3-one + reduced [NADPH--hemoprotein reductase] + O2 = 17beta,19-dihydroxy-3-oxo-5alpha-androstanone + oxidized [NADPH--hemoprotein reductase] + H2O + H(+). It catalyses the reaction 17beta,19-dihydroxy-3-oxo-5alpha-androstanone + reduced [NADPH--hemoprotein reductase] + O2 = 17beta-hydroxy-3,19-dioxo-5alpha-androstanone + oxidized [NADPH--hemoprotein reductase] + 2 H2O + H(+). The enzyme catalyses 17beta-hydroxy-3,19-dioxo-5alpha-androstanone + reduced [NADPH--hemoprotein reductase] + O2 = 17beta-hydroxy-3-oxo-19-nor-5alpha-androst-1-ene + formate + oxidized [NADPH--hemoprotein reductase] + H2O + 2 H(+). It participates in steroid hormone biosynthesis. In terms of biological role, a cytochrome P450 monooxygenase that catalyzes the conversion of C19 androgens, androst-4-ene-3,17-dione (androstenedione) and testosterone to the C18 estrogens, estrone and estradiol, respectively. Catalyzes three successive oxidations of C19 androgens: two conventional oxidations at C19 yielding 19-hydroxy and 19-oxo/19-aldehyde derivatives, followed by a third oxidative aromatization step that involves C1-beta hydrogen abstraction combined with cleavage of the C10-C19 bond to yield a phenolic A ring and formic acid. Alternatively, the third oxidative reaction yields a 19-norsteroid and formic acid. Converts dihydrotestosterone to delta1,10-dehydro 19-nordihydrotestosterone and may play a role in homeostasis of this potent androgen. Also displays 2-hydroxylase activity toward estrone. Mechanistically, uses molecular oxygen inserting one oxygen atom into a substrate, and reducing the second into a water molecule, with two electrons provided by NADPH via cytochrome P450 reductase (CPR; NADPH-ferrihemoprotein reductase). In Capra hircus (Goat), this protein is Aromatase (CYP19A1).